Reading from the N-terminus, the 835-residue chain is Protein translocase subunit SecA (835 aa).

ATP is bound by residues Gln-85, 103–107, and Asp-495; that span reads GEGKT. Residues 806-835 are disordered; it reads KVFLNNDSSDDESSKKRRTRKVRTSKKPWN. A compositionally biased stretch (basic residues) spans 820-835; it reads KKRRTRKVRTSKKPWN.

The protein belongs to the SecA family. Monomer and homodimer. Part of the essential Sec protein translocation apparatus which comprises SecA, SecYEG and auxiliary proteins SecDF. Other proteins may also be involved.

It is found in the cell membrane. Its subcellular location is the cytoplasm. The catalysed reaction is ATP + H2O + cellular proteinSide 1 = ADP + phosphate + cellular proteinSide 2.. Part of the Sec protein translocase complex. Interacts with the SecYEG preprotein conducting channel. Has a central role in coupling the hydrolysis of ATP to the transfer of proteins into and across the cell membrane, serving as an ATP-driven molecular motor driving the stepwise translocation of polypeptide chains across the membrane. The polypeptide is Protein translocase subunit SecA (Onion yellows phytoplasma (strain OY-M)).